The following is a 171-amino-acid chain: Shikimate kinase (171 aa).

13–18 is a binding site for ATP; the sequence is GVGKST. Mg(2+) is bound at residue serine 17. 3 residues coordinate substrate: aspartate 35, arginine 59, and glycine 81. Arginine 118 serves as a coordination point for ATP. Residue arginine 136 participates in substrate binding. Arginine 153 contributes to the ATP binding site.

The protein belongs to the shikimate kinase family. In terms of assembly, monomer. It depends on Mg(2+) as a cofactor.

The protein localises to the cytoplasm. It carries out the reaction shikimate + ATP = 3-phosphoshikimate + ADP + H(+). It functions in the pathway metabolic intermediate biosynthesis; chorismate biosynthesis; chorismate from D-erythrose 4-phosphate and phosphoenolpyruvate: step 5/7. Catalyzes the specific phosphorylation of the 3-hydroxyl group of shikimic acid using ATP as a cosubstrate. This Streptomyces avermitilis (strain ATCC 31267 / DSM 46492 / JCM 5070 / NBRC 14893 / NCIMB 12804 / NRRL 8165 / MA-4680) protein is Shikimate kinase.